Here is a 644-residue protein sequence, read N- to C-terminus: Core protein VP4 (644 aa).

The protein belongs to the orbivirus VP4 family.

It is found in the virion. Functionally, the VP4 protein is one of the five proteins (with VP1, VP3, VP6 and VP7) which form the inner capsid of the virus. The sequence is that of Core protein VP4 (Segment-4) from Antilocapra americana (Pronghorn).